Here is a 272-residue protein sequence, read N- to C-terminus: Putative pyruvate, phosphate dikinase regulatory protein (272 aa).

151 to 158 (GISRTSKT) contributes to the ADP binding site.

The protein belongs to the pyruvate, phosphate/water dikinase regulatory protein family. PDRP subfamily.

The enzyme catalyses N(tele)-phospho-L-histidyl/L-threonyl-[pyruvate, phosphate dikinase] + ADP = N(tele)-phospho-L-histidyl/O-phospho-L-threonyl-[pyruvate, phosphate dikinase] + AMP + H(+). It carries out the reaction N(tele)-phospho-L-histidyl/O-phospho-L-threonyl-[pyruvate, phosphate dikinase] + phosphate + H(+) = N(tele)-phospho-L-histidyl/L-threonyl-[pyruvate, phosphate dikinase] + diphosphate. Functionally, bifunctional serine/threonine kinase and phosphorylase involved in the regulation of the pyruvate, phosphate dikinase (PPDK) by catalyzing its phosphorylation/dephosphorylation. This is Putative pyruvate, phosphate dikinase regulatory protein from Staphylococcus aureus (strain Mu3 / ATCC 700698).